We begin with the raw amino-acid sequence, 256 residues long: Fibroblast growth factor 3 (256 aa).

The signal sequence occupies residues 1-18; it reads MVIILLLLLLSFLDPSLE. Disordered regions lie at residues 31–54, 151–176, and 219–256; these read APCA…GGVY, RHHA…SSKR, and LRES…RADI. Residues 238 to 256 are compositionally biased toward basic residues; it reads ERRRRRHRGSKGHNRRADI.

It belongs to the heparin-binding growth factors family.

The protein localises to the secreted. In terms of biological role, plays an important role in the regulation of embryonic development, cell proliferation, and cell differentiation. In Danio rerio (Zebrafish), this protein is Fibroblast growth factor 3 (fgf3).